The chain runs to 104 residues: Sweet protein mabinlin-1 (104 aa).

Disulfide bonds link Cys4–Cys53, Cys17–Cys42, Cys43–Cys91, and Cys55–Cys99.

This sequence belongs to the 2S seed storage albumins family. As to quaternary structure, heterodimer of a small A and a large B chain linked by disulfide bonds.

Functionally, 2S seed storage protein having sweetness-inducing activity. This form is not heat stable. The protein is Sweet protein mabinlin-1 of Capparis masaikai (Mabinlang).